The chain runs to 134 residues: UPF0412 protein YaaI (134 aa).

A signal peptide spans Met1–Ala23.

It belongs to the UPF0412 family.

In Salmonella choleraesuis (strain SC-B67), this protein is UPF0412 protein YaaI.